Reading from the N-terminus, the 286-residue chain is Probable xyloglucan endotransglucosylase/hydrolase protein 23 (286 aa).

A signal peptide spans 1–24; the sequence is MAMISYSTIVVALLASFMICSVSA. In terms of domain architecture, GH16 spans 25–214; sequence NFQRDVEITW…WSKAPFTASY (190 aa). Glu-100 functions as the Nucleophile in the catalytic mechanism. Residue Glu-104 is the Proton donor of the active site. Residue Glu-104 coordinates xyloglucan. Residue Asn-108 is glycosylated (N-linked (GlcNAc...) asparagine). Xyloglucan contacts are provided by residues 117 to 119, 127 to 129, 193 to 194, and Gly-198; these read HTN, DRE, and EW. An intrachain disulfide couples Cys-222 to Cys-231. Asn-233 carries N-linked (GlcNAc...) asparagine glycosylation. A disulfide bond links Cys-269 and Cys-283. Position 274 (Arg-274) interacts with xyloglucan.

The protein belongs to the glycosyl hydrolase 16 family. XTH group 2 subfamily. In terms of processing, contains at least one intrachain disulfide bond essential for its enzymatic activity.

It is found in the secreted. The protein localises to the cell wall. It localises to the extracellular space. The protein resides in the apoplast. The enzyme catalyses breaks a beta-(1-&gt;4) bond in the backbone of a xyloglucan and transfers the xyloglucanyl segment on to O-4 of the non-reducing terminal glucose residue of an acceptor, which can be a xyloglucan or an oligosaccharide of xyloglucan.. Functionally, catalyzes xyloglucan endohydrolysis (XEH) and/or endotransglycosylation (XET). Cleaves and religates xyloglucan polymers, an essential constituent of the primary cell wall, and thereby participates in cell wall construction of growing tissues. In Arabidopsis thaliana (Mouse-ear cress), this protein is Probable xyloglucan endotransglucosylase/hydrolase protein 23 (XTH23).